We begin with the raw amino-acid sequence, 442 residues long: D(2) dopamine receptor A (442 aa).

At 1 to 31 (MDPQNLSMYNDDINNGTNGTAVDQKPHYNYY) the chain is on the extracellular side. 3 N-linked (GlcNAc...) asparagine glycosylation sites follow: Asn5, Asn15, and Asn18. The helical transmembrane segment at 32–54 (AMLLTLLVFVIVFGNVLVCIAVS) threads the bilayer. Residues 55–64 (REKALQTTTN) are Cytoplasmic-facing. Residues 65-87 (YLIVSLAVADLLVATLVMPWAVY) form a helical membrane-spanning segment. The Extracellular portion of the chain corresponds to 88–102 (MEVVGEWRFSRIHCD). Cysteines 101 and 176 form a disulfide. The chain crosses the membrane as a helical span at residues 103 to 124 (IFVTLDVMMCTASILNLCAISI). The Cytoplasmic segment spans residues 125–145 (DRYTAVAMPMLYNTRYSSKRR). The helical transmembrane segment at 146 to 166 (VTVMISVVWVLSFAISCPLLF) threads the bilayer. The Extracellular segment spans residues 167–182 (GLNNTGSKVCIIDNPA). The helical transmembrane segment at 183–207 (FVIYSSIVSFYVPFIVTLLVYVQIY) threads the bilayer. Residues 208–372 (IVLRKRRKRV…SQHKEKKATQ (165 aa)) lie on the Cytoplasmic side of the membrane. The tract at residues 273 to 335 (DMEMEMMSST…KNGHPKDSTK (63 aa)) is disordered. Polar residues predominate over residues 304-318 (ATSNQCKNASLTSPV). A compositionally biased stretch (basic and acidic residues) spans 322–335 (YKAEKNGHPKDSTK). The chain crosses the membrane as a helical span at residues 373-394 (MLAIVLGVFIICWLPFFIIHIL). The Extracellular segment spans residues 395 to 408 (NMHCNCNIPQALYS). A disulfide bridge links Cys398 with Cys400. The chain crosses the membrane as a helical span at residues 409–430 (AFTWLGYVNSAVNPIIYTTFNV). Residues 431 to 442 (EFRKAFIKILHC) lie on the Cytoplasmic side of the membrane. Cys442 carries S-palmitoyl cysteine lipidation.

It belongs to the G-protein coupled receptor 1 family. Post-translationally, palmitoylated. Palmitoylation is probably required for proper localization to the plasma membrane and stability of the receptor. Brain; pituitary.

It localises to the cell membrane. The protein localises to the golgi apparatus membrane. In terms of biological role, this is one of the five types (D1 to D5) of receptors for dopamine. The activity of this receptor is mediated by G proteins which inhibits adenylyl cyclase. In Xenopus D2R is involved in the regulation of the melanotrope cells of the intermediate pituitary during background adaptation of the animal. This Xenopus laevis (African clawed frog) protein is D(2) dopamine receptor A (drd2-a).